We begin with the raw amino-acid sequence, 398 residues long: Subtilisin-like serine protease EN45_076310 (398 aa).

A signal peptide spans 1 to 19 (MGFLKLLSTSLATLAVVNA). Residues 20-115 (GKLLTANDGD…VEPDMVVNAT (96 aa)) constitute a propeptide, removed in mature form. An Inhibitor I9 domain is found at 35 to 113 (SYIVVMNDGV…KYVEPDMVVN (79 aa)). N-linked (GlcNAc...) asparagine glycosylation is present at Asn-113. The tract at residues 124–134 (PSWGLSRISSK) is igE-binding. Residues 125–398 (SWGLSRISSK…KLLYNGINAQ (274 aa)) enclose the Peptidase S8 domain. Asp-157 (charge relay system) is an active-site residue. The interval 163–170 (GHADFGGR) is igE-binding. The tract at residues 175–195 (TNTADNDDTDGNGHGTHTAST) is disordered. The active-site Charge relay system is His-188. Residues 227-245 (IAGMDWAVKDSKSRGATGK) form an igE-binding region. Residue Asn-249 is glycosylated (N-linked (GlcNAc...) asparagine). An igE-binding region spans residues 310-318 (SFTNFGSVV). The active-site Charge relay system is the Ser-343.

Belongs to the peptidase S8 family.

The protein resides in the secreted. Its activity is regulated as follows. Inhibited by phenylmethanesulfonyl fluoride (PMSF) and diethyl pyrocarbonate (DEPC), but not by benzamidine. Serine protease that hydrolyzes casein, gelatin and human collagen type IV, but not elastin in vitro. Hydrolyzes OCLN of the human lung epithelial cells at 202-Gln-|-Ser-203 and Gln-211-|-Ile-212. This is Subtilisin-like serine protease EN45_076310 from Penicillium chrysogenum (Penicillium notatum).